The chain runs to 325 residues: Elongation factor P--(R)-beta-lysine ligase (325 aa).

A substrate-binding site is contributed by 76–78 (SPE). Residues 100-102 (RNE) and asparagine 109 each bind ATP. Residue tyrosine 118 participates in substrate binding. 244–245 (EL) provides a ligand contact to ATP. Substrate is bound at residue glutamate 251. Glycine 300 provides a ligand contact to ATP.

It belongs to the class-II aminoacyl-tRNA synthetase family. EpmA subfamily. In terms of assembly, homodimer.

The enzyme catalyses D-beta-lysine + L-lysyl-[protein] + ATP = N(6)-((3R)-3,6-diaminohexanoyl)-L-lysyl-[protein] + AMP + diphosphate + H(+). Functionally, with EpmB is involved in the beta-lysylation step of the post-translational modification of translation elongation factor P (EF-P). Catalyzes the ATP-dependent activation of (R)-beta-lysine produced by EpmB, forming a lysyl-adenylate, from which the beta-lysyl moiety is then transferred to the epsilon-amino group of a conserved specific lysine residue in EF-P. In Klebsiella pneumoniae subsp. pneumoniae (strain ATCC 700721 / MGH 78578), this protein is Elongation factor P--(R)-beta-lysine ligase.